We begin with the raw amino-acid sequence, 1016 residues long: MNPSLVTAINAPISPSPRSPLLSHFLPTLPHRFSKSECLSRRRYRVSFPRSSAASSDQLSVSTQAKNPGIHGNKKELTGLQPIVEKMTPPVRLATSAVVLAASLATGYGLGLRLAGSRNIAFGGAAVAGAAGGAVVYALNSAVPEVAAISLHNYVAEFEDPASVTKDDVEKIADRYGVNKGDEAFQAEICDIYCRYVTSVLPTEGQSLKGDEVAKIVKFKNALGIDEPDAAAMHMEIGRRIFRQRLETGEREGDAEQRRAFMRLVYVSALVFGDASSFLLPWKRVLKVTDAQVEIAIRENAKQLYAERLKLVGRDINVENLVDLRKSQLSFKLSDELAEDLFREHTRKVVVENISSALSILKSRTRAAKSLASVVEELEKVLEFNNLLVSLKSHSEADQFARGVGPISLIGDESDFERRMDDLKLLYRAYVTDALSGGRLEENKLVAMSQLRNILGLGKREAEAISVDVTSKSYRKRLANAVSSGDLEAQDSKAKYLQKLCEELHFDAQKAGAIHEEIYRQKLQQCVTDGELSDDNVAALLRLRVMLCIPQQTVDTAHAEICGTIFEKVVRDAISSGVDGYDAETRKSVRKAAHGLRLSRETAMSIASKAVRRVFTNYIRRARAAENRTDSAKELKKMIAFNTLVVTEMVADIKGESSDKAPEEDPVQEKEEDDEDEEWGSLESLRKTRPDKELAEKMGKPGQTEITLKDDLPDRDRIDLYKTYLLYCVTGEVTRIPFGAQITTKRDDSEYLLLNQLGGILGLSSKEIVNIHVGLAEQAFRQQAEVILADGQLTKARVEQLDELQKQVGLPQPQAEKVIKNITTTKMANAIETAVNQGRLNIKQIRELKEANVSLDSMIAVSLREKLFKKTVSDIFSSGTGEFDETEVYQTIPSDLSIDVEKAKRVVHDLAQSRLSNSLVQAVALLRQRNSKGVVLSLNDLLACDKAVPAEPMSWEVSEELSDLYAIYSKSDPKPAPEKVLRLQYLLGIDDSTATALREMEDGALSSAAEEGNFVF.

The N-terminal 51 residues, 1 to 51, are a transit peptide targeting the chloroplast; sequence MNPSLVTAINAPISPSPRSPLLSHFLPTLPHRFSKSECLSRRRYRVSFPRS. S52 is modified (N-acetylserine). Residues 52-95 lie on the Stromal side of the membrane; that stretch reads SAASSDQLSVSTQAKNPGIHGNKKELTGLQPIVEKMTPPVRLAT. The helical transmembrane segment at 96-116 threads the bilayer; sequence SAVVLAASLATGYGLGLRLAG. Over 117–118 the chain is Chloroplast intermembrane; it reads SR. Residues 119–139 form a helical membrane-spanning segment; that stretch reads NIAFGGAAVAGAAGGAVVYAL. Residues 140–259 lie on the Stromal side of the membrane; the sequence is NSAVPEVAAI…EREGDAEQRR (120 aa). Residues 260–280 traverse the membrane as a helical segment; it reads AFMRLVYVSALVFGDASSFLL. Topologically, residues 281–368 are chloroplast intermembrane; sequence PWKRVLKVTD…SILKSRTRAA (88 aa). Residues 369–386 form a helical membrane-spanning segment; that stretch reads KSLASVVEELEKVLEFNN. The Stromal segment spans residues 387–632; it reads LLVSLKSHSE…RAAENRTDSA (246 aa). The chain crosses the membrane as a helical span at residues 633–650; sequence KELKKMIAFNTLVVTEMV. Topologically, residues 651-719 are chloroplast intermembrane; sequence ADIKGESSDK…DDLPDRDRID (69 aa). Basic and acidic residues predominate over residues 654–669; the sequence is KGESSDKAPEEDPVQE. Positions 654-708 are disordered; sequence KGESSDKAPEEDPVQEKEEDDEDEEWGSLESLRKTRPDKELAEKMGKPGQTEITL. The span at 670-680 shows a compositional bias: acidic residues; sequence KEEDDEDEEWG. Over residues 684–699 the composition is skewed to basic and acidic residues; that stretch reads SLRKTRPDKELAEKMG. Residues 720–736 form a helical membrane-spanning segment; the sequence is LYKTYLLYCVTGEVTRI. The Stromal portion of the chain corresponds to 737 to 1016; sequence PFGAQITTKR…SAAEEGNFVF (280 aa).

The protein belongs to the chloroplast envelope anion channel-forming Tic110 (TC 1.A.18) family. Part of the Tic complex. Interacts with HSP70, HSP93 and TIC40. Interacts with the Toc complex components TOC33, TOC75 and TOC159. Interacts with LTD. As to expression, expressed in seedlings, flowers, leaves, stems and roots.

The protein localises to the plastid. Its subcellular location is the chloroplast inner membrane. Involved in protein precursor import into chloroplasts. Forms a voltage-dependent cation-selective channel at the inner envelope of chloroplasts, which specifically responds to a transit peptide. Associates with both the precursor and mature forms of the preprotein. This Arabidopsis thaliana (Mouse-ear cress) protein is Protein TIC110, chloroplastic (TIC110).